We begin with the raw amino-acid sequence, 361 residues long: Glyceraldehyde-3-phosphate dehydrogenase, glycosomal (361 aa).

Residues 13-14 (RI), D39, and R93 each bind NAD(+). D-glyceraldehyde 3-phosphate is bound by residues 166 to 168 (SCT), T198, 227 to 228 (TG), and R250. Residue C167 is the Nucleophile of the active site. NAD(+) is bound at residue N336. A Microbody targeting signal motif is present at residues 359-361 (SKL).

It belongs to the glyceraldehyde-3-phosphate dehydrogenase family. As to quaternary structure, homotetramer.

It localises to the glycosome. The catalysed reaction is D-glyceraldehyde 3-phosphate + phosphate + NAD(+) = (2R)-3-phospho-glyceroyl phosphate + NADH + H(+). Its pathway is carbohydrate degradation; glycolysis; pyruvate from D-glyceraldehyde 3-phosphate: step 1/5. This chain is Glyceraldehyde-3-phosphate dehydrogenase, glycosomal (GAPDG), found in Crithidia fasciculata.